A 236-amino-acid chain; its full sequence is MARARSRSRSYSPRPRDRSPPRERKGYDDNRLRERPSSRDHESSGPSGLLIRNLPLDARPNDLRDSFERFGPLKDIYLPRNYYTGEPRGFGFVKYRYAEDAAEAMKRMNHKVIGGREIAIVFAEENRKTPQEMRTTNGTSGRHGDYKRTSHRSPRRRYRSHSRSRSPPRRESRHSKVREDDLYSPRRRSRSISRSPLPRNEREYKSRNCRSPREERVLTPIRSRCLSRSRSRSLSR.

Disordered regions lie at residues 1–53 (MARA…LIRN) and 124–219 (EENR…RVLT). Residues 14 to 43 (RPRDRSPPRERKGYDDNRLRERPSSRDHES) are compositionally biased toward basic and acidic residues. Residues 47–125 (SGLLIRNLPL…REIAIVFAEE (79 aa)) enclose the RRM domain. Over residues 149–176 (TSHRSPRRRYRSHSRSRSPPRRESRHSK) the composition is skewed to basic residues. Ser-184 carries the phosphoserine modification. Positions 199–217 (RNEREYKSRNCRSPREERV) are enriched in basic and acidic residues.

Belongs to the splicing factor SR family. SCL subfamily. As to quaternary structure, component of the spliceosome. Interacts with RS2Z33, CYP59, CYP63 and CYP95.

Its subcellular location is the nucleus speckle. In terms of biological role, involved in intron recognition and spliceosome assembly. Probably active at the 5' splice sites. This is Serine/arginine-rich SC35-like splicing factor SCL28 (SCL28) from Arabidopsis thaliana (Mouse-ear cress).